The sequence spans 410 residues: Peptidase T (410 aa).

A Zn(2+)-binding site is contributed by H79. Residue D81 is part of the active site. A Zn(2+)-binding site is contributed by D142. Residue E176 is the Proton acceptor of the active site. Positions 177, 199, and 381 each coordinate Zn(2+).

The protein belongs to the peptidase M20B family. It depends on Zn(2+) as a cofactor.

It localises to the cytoplasm. It carries out the reaction Release of the N-terminal residue from a tripeptide.. Its function is as follows. Cleaves the N-terminal amino acid of tripeptides. The polypeptide is Peptidase T (Listeria monocytogenes serotype 4b (strain F2365)).